Here is a 251-residue protein sequence, read N- to C-terminus: MAKHFRIGMIVPSSNTTMETEIPAMLQSRMKEIPEETFTFHSSRMRMMHVTKEELKKMDEESDRCAIELSDARCDVLAYACLVAIMCQGPGYHEKSEARLASLTAQNGGAAPVISSAGALIDGIRTLGAKKIALIAPYMKPLTNQVIEYITASGIEVTDSISLEIPDNLEVGRQDPMRLIEIVKNLDVSNADAVVLSACVQMPSLPAIQKVQDQLGLPVLSAATSTVYKILKSLNLKTYVPNAGSLLSGKY.

Substrate-binding positions include asparagine 15, 81-83 (CLV), tyrosine 138, and asparagine 168. Cysteine 81 (nucleophile) is an active-site residue. An S-(2-succinyl)cysteine modification is found at cysteine 81. The active-site Proton donor is cysteine 199. 200–201 (VQ) is a substrate binding site.

The protein belongs to the maleate isomerase family. In terms of assembly, homodimer.

The enzyme catalyses maleate = fumarate. Functionally, catalyzes cis-trans isomerization of the C2-C3 double bond in maleate to yield fumarate. The sequence is that of Maleate isomerase from Geobacillus stearothermophilus (Bacillus stearothermophilus).